A 428-amino-acid polypeptide reads, in one-letter code: MLDIKLFRNEPDYLKGKVKLRGMDPKVVDEVLELDGKRRELIGKAEEMKAERNRVSNEIAEKKRNKEDADDVIAEMRKLGDDIKEVDTELNEVDEKLQYRLSTIPNVMHDDVPEGDSDEENIEVKKWGTPRQFDFEAKAHWDLIEELGMANFDRAARVSGARFVFLTNEGAQLERALMNYMLTKHTTQHGYTEMMVPQLVNANSMYGTGQLPKFEEDLFKVEKEGLYMIPTAEVPLTNYYREEVLSADQLPGKFTAQSACFRSEAGSAGRDTRGLIRLHQFDKVELVRFEKPEDSWDALEQLTSNAEAILEELELPYRRVILCTGDLGFSSSKTYDLEVWLPSYDEYKEISSCSNMTDFQARRANIRFKRDKDAKPELVHTLNGSGLAVGRTFAAIVENYQNADGSITIPEALVPFMGGKTKIGPATK.

231–233 (TAE) serves as a coordination point for L-serine. Residue 262 to 264 (RSE) coordinates ATP. Glu285 lines the L-serine pocket. Residue 349-352 (EISS) participates in ATP binding. Ser385 is a binding site for L-serine.

It belongs to the class-II aminoacyl-tRNA synthetase family. Type-1 seryl-tRNA synthetase subfamily. In terms of assembly, homodimer. The tRNA molecule binds across the dimer.

The protein localises to the cytoplasm. The catalysed reaction is tRNA(Ser) + L-serine + ATP = L-seryl-tRNA(Ser) + AMP + diphosphate + H(+). It catalyses the reaction tRNA(Sec) + L-serine + ATP = L-seryl-tRNA(Sec) + AMP + diphosphate + H(+). It participates in aminoacyl-tRNA biosynthesis; selenocysteinyl-tRNA(Sec) biosynthesis; L-seryl-tRNA(Sec) from L-serine and tRNA(Sec): step 1/1. Functionally, catalyzes the attachment of serine to tRNA(Ser). Is also able to aminoacylate tRNA(Sec) with serine, to form the misacylated tRNA L-seryl-tRNA(Sec), which will be further converted into selenocysteinyl-tRNA(Sec). In Staphylococcus carnosus (strain TM300), this protein is Serine--tRNA ligase.